Reading from the N-terminus, the 244-residue chain is PQQPFPLQPQQSFLWQSQQPFLQQPQQPSPQPQQVVQIISPATPTTIPSAGKPTSAPFPQQQQQHQQLAQQQIPVVQPSILQQLNPCKVFLQQQCSPVAMPQRLARSQMLQQSSCHVMQQQCCQQLPQIPQQSRYQAIRAIIYSIILQEQQQVQGSIQSQQQQPQQLGQCVSQPQQQSQQQLGQQPQQQQLAQGTFLQPHQIAQLEVMTSIALRILPTMCSVNVPLYRTTTSVPFGVGTGVGAY.

The tract at residues 18 to 64 (QQPFLQQPQQPSPQPQQVVQIISPATPTTIPSAGKPTSAPFPQQQQQ) is disordered. The segment covering 35–48 (VVQIISPATPTTIP) has biased composition (polar residues).

It belongs to the gliadin/glutenin family.

Its function is as follows. Gliadin is the major seed storage protein in wheat. This is Gamma-gliadin from Triticum aestivum (Wheat).